The primary structure comprises 200 residues: MTRLILATRNAGKITELRAILADAGLTHDLVGADAYPDIPDVKETGVTFAENALLKAHALARATGLPAVADDSGLCVDVLGGAPGIFSARWSGRHGDDRANLDLLLAQLSDISEAHRGAHFACAAALALPDGTERVVEGQLRGTLRHTPTGTNGFGYDPVLQPEGETRTCAELSAEEKNAISHRGKAFRELVPVVRELLG.

Substrate is bound at residue 8-13; sequence TRNAGK. Asp72 functions as the Proton acceptor in the catalytic mechanism. Asp72 contributes to the Mg(2+) binding site. Residues Ser73, 155–158, Lys178, and 183–184 each bind substrate; these read FGYD and HR.

It belongs to the HAM1 NTPase family. As to quaternary structure, homodimer. The cofactor is Mg(2+).

It carries out the reaction XTP + H2O = XMP + diphosphate + H(+). It catalyses the reaction dITP + H2O = dIMP + diphosphate + H(+). The enzyme catalyses ITP + H2O = IMP + diphosphate + H(+). Pyrophosphatase that catalyzes the hydrolysis of nucleoside triphosphates to their monophosphate derivatives, with a high preference for the non-canonical purine nucleotides XTP (xanthosine triphosphate), dITP (deoxyinosine triphosphate) and ITP. Seems to function as a house-cleaning enzyme that removes non-canonical purine nucleotides from the nucleotide pool, thus preventing their incorporation into DNA/RNA and avoiding chromosomal lesions. The polypeptide is dITP/XTP pyrophosphatase (Streptomyces avermitilis (strain ATCC 31267 / DSM 46492 / JCM 5070 / NBRC 14893 / NCIMB 12804 / NRRL 8165 / MA-4680)).